We begin with the raw amino-acid sequence, 159 residues long: Major allergen Mal d 1 (159 aa).

It belongs to the BetVI family.

The sequence is that of Major allergen Mal d 1 from Malus domestica (Apple).